A 716-amino-acid polypeptide reads, in one-letter code: 1,4-alpha-glucan branching enzyme GlgB (716 aa).

D399 functions as the Nucleophile in the catalytic mechanism. The active-site Proton donor is the E452.

This sequence belongs to the glycosyl hydrolase 13 family. GlgB subfamily. As to quaternary structure, monomer.

It carries out the reaction Transfers a segment of a (1-&gt;4)-alpha-D-glucan chain to a primary hydroxy group in a similar glucan chain.. It functions in the pathway glycan biosynthesis; glycogen biosynthesis. In terms of biological role, catalyzes the formation of the alpha-1,6-glucosidic linkages in glycogen by scission of a 1,4-alpha-linked oligosaccharide from growing alpha-1,4-glucan chains and the subsequent attachment of the oligosaccharide to the alpha-1,6 position. The polypeptide is 1,4-alpha-glucan branching enzyme GlgB (Rhodopseudomonas palustris (strain HaA2)).